Consider the following 330-residue polypeptide: Intraflagellar transport protein 46 homolog (330 aa).

Disordered regions lie at residues 1-21 (MDRP…ATPR) and 55-112 (SIKT…EGVY). The segment covering 7–16 (ETVDIPDSED) has biased composition (acidic residues). Residues 68–79 (SSSEKLCDRGSS) are compositionally biased toward basic and acidic residues. Positions 80–101 (DDDDDDDNDDDEDEDDDDDDEN) are enriched in acidic residues.

Belongs to the IFT46 family.

It is found in the cytoplasm. The protein localises to the cytoskeleton. Its subcellular location is the cilium basal body. The protein resides in the cell projection. It localises to the cilium. Its function is as follows. Forms part of a complex involved in intraflagellar transport (IFT), the bi-directional movement of particles required for the assembly, maintenance and functioning of primary cilia. This Schistosoma japonicum (Blood fluke) protein is Intraflagellar transport protein 46 homolog.